Consider the following 96-residue polypeptide: Cystatin (96 aa).

The Cystatin domain occupies D22–S65. An N-linked (GlcNAc...) asparagine glycan is attached at N29.

The protein belongs to the cystatin family. As to quaternary structure, interacts with cathepsin L-like peptidase; the interaction results in inhibition of cathepsin L-like peptidase activity. In terms of tissue distribution, salivary gland. Midgut.

Functionally, cysteine proteinase inhibitor. Inhibits cathepsin L-like peptidase. Increases cell viability following apoptosis induction by staurosporine. Inhibits human cathepsin S (CTSS), human cathepsin L2 (CTSV), human cathepsin L (CTSL), human cathepsin B (CTSB) and papain. In terms of biological role, (Microbial infection) Modulates dengue virus type 2 replication in salivary glands. In Aedes aegypti (Yellowfever mosquito), this protein is Cystatin.